The primary structure comprises 289 residues: Bifunctional protein FolD (289 aa).

Residues 166-168 and Ile232 contribute to the NADP(+) site; that span reads GVS.

Belongs to the tetrahydrofolate dehydrogenase/cyclohydrolase family. In terms of assembly, homodimer.

The catalysed reaction is (6R)-5,10-methylene-5,6,7,8-tetrahydrofolate + NADP(+) = (6R)-5,10-methenyltetrahydrofolate + NADPH. It carries out the reaction (6R)-5,10-methenyltetrahydrofolate + H2O = (6R)-10-formyltetrahydrofolate + H(+). It participates in one-carbon metabolism; tetrahydrofolate interconversion. In terms of biological role, catalyzes the oxidation of 5,10-methylenetetrahydrofolate to 5,10-methenyltetrahydrofolate and then the hydrolysis of 5,10-methenyltetrahydrofolate to 10-formyltetrahydrofolate. This chain is Bifunctional protein FolD, found in Methylobacillus flagellatus (strain ATCC 51484 / DSM 6875 / VKM B-1610 / KT).